Reading from the N-terminus, the 252-residue chain is Ribosomal RNA small subunit methyltransferase J (252 aa).

Residues 101-102 (RD), 117-118 (ER), 153-154 (SS), and Asp171 each bind S-adenosyl-L-methionine.

Belongs to the methyltransferase superfamily. RsmJ family.

It is found in the cytoplasm. The catalysed reaction is guanosine(1516) in 16S rRNA + S-adenosyl-L-methionine = N(2)-methylguanosine(1516) in 16S rRNA + S-adenosyl-L-homocysteine + H(+). Its function is as follows. Specifically methylates the guanosine in position 1516 of 16S rRNA. The polypeptide is Ribosomal RNA small subunit methyltransferase J (Salmonella schwarzengrund (strain CVM19633)).